Consider the following 1363-residue polypeptide: Xanthine dehydrogenase (1363 aa).

A 2Fe-2S ferredoxin-type domain is found at 35-121 (DTIRFYLNGT…GKHVITVEGI (87 aa)). [2Fe-2S] cluster-binding residues include C73, C78, C81, C103, C142, C145, C177, and C179. In terms of domain architecture, FAD-binding PCMH-type spans 266 to 450 (FGNKRKKWYR…SSLRIPTASE (185 aa)). FAD-binding positions include 294–301 (LIGGSTET), F374, 384–388 (SPAGN), D397, and K459. The Mo-molybdopterin site is built by Q798 and F829. Residues E833 and R911 each coordinate substrate. R943 is a binding site for Mo-molybdopterin. F945 and T1041 together coordinate substrate. A1110 contacts Mo-molybdopterin. E1295 functions as the Proton acceptor in the catalytic mechanism.

Belongs to the xanthine dehydrogenase family. FAD serves as cofactor. Requires Mo-molybdopterin as cofactor. [2Fe-2S] cluster is required as a cofactor.

It is found in the peroxisome. It catalyses the reaction xanthine + NAD(+) + H2O = urate + NADH + H(+). The catalysed reaction is hypoxanthine + NAD(+) + H2O = xanthine + NADH + H(+). Its function is as follows. Key enzyme in purine degradation. Catalyzes the oxidation of hypoxanthine to xanthine. Catalyzes the oxidation of xanthine to uric acid. The polypeptide is Xanthine dehydrogenase (hxA) (Emericella nidulans (strain FGSC A4 / ATCC 38163 / CBS 112.46 / NRRL 194 / M139) (Aspergillus nidulans)).